The primary structure comprises 264 residues: Myozenin-2 (264 aa).

Arg53 carries the post-translational modification Omega-N-methylarginine. The disordered stretch occupies residues 98–134; that stretch reads ESGSQQAPFTPPNTPDPRSPPNPENIAPGYSGPLKEI. Ser101 bears the Phosphoserine mark. The segment covering 106–120 has biased composition (pro residues); the sequence is FTPPNTPDPRSPPNP. Phosphothreonine occurs at positions 107 and 111. Residue Ser116 is modified to Phosphoserine.

The protein belongs to the myozenin family. In terms of assembly, interacts via its C-terminus with spectrin repeats 3 and 4 of ACTN2. Interacts with ACTN1, LDB3, MYOT and PPP3CA.

It is found in the cytoplasm. Its subcellular location is the myofibril. It localises to the sarcomere. The protein resides in the z line. Myozenins may serve as intracellular binding proteins involved in linking Z line proteins such as alpha-actinin, gamma-filamin, TCAP/telethonin, LDB3/ZASP and localizing calcineurin signaling to the sarcomere. Plays an important role in the modulation of calcineurin signaling. May play a role in myofibrillogenesis. This is Myozenin-2 (MYOZ2) from Bos taurus (Bovine).